The chain runs to 78 residues: RNA-binding protein Hfq (78 aa).

The 60-residue stretch at 10–69 (DPFLNTLRKEHVPVSIYLVNGIKLQGQIESFDQYVVLLRNTVTQMVYKHAISTVVPARAV) folds into the Sm domain.

This sequence belongs to the Hfq family. Homohexamer.

Functionally, RNA chaperone that binds small regulatory RNA (sRNAs) and mRNAs to facilitate mRNA translational regulation in response to envelope stress, environmental stress and changes in metabolite concentrations. Also binds with high specificity to tRNAs. The polypeptide is RNA-binding protein Hfq (Bordetella bronchiseptica (strain ATCC BAA-588 / NCTC 13252 / RB50) (Alcaligenes bronchisepticus)).